The following is a 408-amino-acid chain: UDP-N-acetylglucosamine--N-acetylmuramyl-(pentapeptide) pyrophosphoryl-undecaprenol N-acetylglucosamine transferase (408 aa).

Residues methionine 1–glycine 20 form a disordered region. UDP-N-acetyl-alpha-D-glucosamine is bound by residues threonine 41–glycine 43, asparagine 160, arginine 197, serine 231, and glutamine 327.

The protein belongs to the glycosyltransferase 28 family. MurG subfamily.

It is found in the cell membrane. It catalyses the reaction di-trans,octa-cis-undecaprenyl diphospho-N-acetyl-alpha-D-muramoyl-L-alanyl-D-glutamyl-meso-2,6-diaminopimeloyl-D-alanyl-D-alanine + UDP-N-acetyl-alpha-D-glucosamine = di-trans,octa-cis-undecaprenyl diphospho-[N-acetyl-alpha-D-glucosaminyl-(1-&gt;4)]-N-acetyl-alpha-D-muramoyl-L-alanyl-D-glutamyl-meso-2,6-diaminopimeloyl-D-alanyl-D-alanine + UDP + H(+). Its pathway is cell wall biogenesis; peptidoglycan biosynthesis. In terms of biological role, cell wall formation. Catalyzes the transfer of a GlcNAc subunit on undecaprenyl-pyrophosphoryl-MurNAc-pentapeptide (lipid intermediate I) to form undecaprenyl-pyrophosphoryl-MurNAc-(pentapeptide)GlcNAc (lipid intermediate II). This Mycobacterium avium (strain 104) protein is UDP-N-acetylglucosamine--N-acetylmuramyl-(pentapeptide) pyrophosphoryl-undecaprenol N-acetylglucosamine transferase.